A 364-amino-acid chain; its full sequence is GMP reductase (364 aa).

Residues 26–27, lysine 78, 132–134, and 183–184 each bind NADP(+); these read SR, DVA, and IG. K(+)-binding residues include glycine 184, glycine 186, and cysteine 189. The active-site Thioimidate intermediate is the cysteine 189. The active-site Proton donor/acceptor is the threonine 191. Arginine 192 provides a ligand contact to K(+). GMP is bound by residues 222 to 224, 245 to 246, 271 to 273, and 289 to 293; these read DGG, GG, GMS, and RASEG. NADP(+) contacts are provided by residues methionine 272, 288 to 289, and 317 to 320; these read YR and SACT.

It belongs to the IMPDH/GMPR family. GuaC type 1 subfamily. In terms of assembly, homotetramer.

The catalysed reaction is IMP + NH4(+) + NADP(+) = GMP + NADPH + 2 H(+). In terms of biological role, catalyzes the irreversible NADPH-dependent deamination of GMP to IMP. It functions in the conversion of nucleobase, nucleoside and nucleotide derivatives of G to A nucleotides, and in maintaining the intracellular balance of A and G nucleotides. The polypeptide is GMP reductase (gmr-1) (Onchocerca volvulus).